The primary structure comprises 370 residues: tRNA 2-selenouridine synthase (370 aa).

The region spanning 12–136 is the Rhodanese domain; the sequence is FLDDVPMMDM…MRTFLLETTQ (125 aa). Cys-95 serves as the catalytic S-selanylcysteine intermediate.

This sequence belongs to the SelU family. As to quaternary structure, monomer.

The enzyme catalyses 5-methylaminomethyl-2-thiouridine(34) in tRNA + selenophosphate + (2E)-geranyl diphosphate + H2O + H(+) = 5-methylaminomethyl-2-selenouridine(34) in tRNA + (2E)-thiogeraniol + phosphate + diphosphate. It catalyses the reaction 5-methylaminomethyl-2-thiouridine(34) in tRNA + (2E)-geranyl diphosphate = 5-methylaminomethyl-S-(2E)-geranyl-thiouridine(34) in tRNA + diphosphate. It carries out the reaction 5-methylaminomethyl-S-(2E)-geranyl-thiouridine(34) in tRNA + selenophosphate + H(+) = 5-methylaminomethyl-2-(Se-phospho)selenouridine(34) in tRNA + (2E)-thiogeraniol. The catalysed reaction is 5-methylaminomethyl-2-(Se-phospho)selenouridine(34) in tRNA + H2O = 5-methylaminomethyl-2-selenouridine(34) in tRNA + phosphate. Functionally, involved in the post-transcriptional modification of the uridine at the wobble position (U34) of tRNA(Lys), tRNA(Glu) and tRNA(Gln). Catalyzes the conversion of 2-thiouridine (S2U-RNA) to 2-selenouridine (Se2U-RNA). Acts in a two-step process involving geranylation of 2-thiouridine (S2U) to S-geranyl-2-thiouridine (geS2U) and subsequent selenation of the latter derivative to 2-selenouridine (Se2U) in the tRNA chain. The sequence is that of tRNA 2-selenouridine synthase from Pseudomonas putida (strain ATCC 47054 / DSM 6125 / CFBP 8728 / NCIMB 11950 / KT2440).